A 78-amino-acid polypeptide reads, in one-letter code: UPF0154 protein lp_2061 (78 aa).

Residues 5-27 (TGIWILIVVIGVLVGLTGGFFGA) traverse the membrane as a helical segment.

It belongs to the UPF0154 family.

It is found in the membrane. In Lactiplantibacillus plantarum (strain ATCC BAA-793 / NCIMB 8826 / WCFS1) (Lactobacillus plantarum), this protein is UPF0154 protein lp_2061.